Consider the following 243-residue polypeptide: 3-deoxy-manno-octulosonate cytidylyltransferase (243 aa).

This sequence belongs to the KdsB family.

Its subcellular location is the cytoplasm. The enzyme catalyses 3-deoxy-alpha-D-manno-oct-2-ulosonate + CTP = CMP-3-deoxy-beta-D-manno-octulosonate + diphosphate. The protein operates within nucleotide-sugar biosynthesis; CMP-3-deoxy-D-manno-octulosonate biosynthesis; CMP-3-deoxy-D-manno-octulosonate from 3-deoxy-D-manno-octulosonate and CTP: step 1/1. It functions in the pathway bacterial outer membrane biogenesis; lipopolysaccharide biosynthesis. In terms of biological role, activates KDO (a required 8-carbon sugar) for incorporation into bacterial lipopolysaccharide in Gram-negative bacteria. This Bartonella quintana (strain Toulouse) (Rochalimaea quintana) protein is 3-deoxy-manno-octulosonate cytidylyltransferase.